The sequence spans 335 residues: Deoxyhypusine hydroxylase (335 aa).

HEAT-like PBS-type repeat units follow at residues 74 to 100 (LKHE…VLED), 107 to 133 (CRHE…LRDD), 203 to 233 (KRYR…LAEG), 241 to 267 (FRHE…TLSD), and 274 to 301 (VRHE…FVND). Positions 76, 77, 109, and 110 each coordinate Fe cation. 4 residues coordinate Fe cation: H243, E244, H276, and E277.

The protein belongs to the deoxyhypusine hydroxylase family. Fe(2+) is required as a cofactor.

It is found in the cytoplasm. The protein resides in the nucleus. It carries out the reaction [eIF5A protein]-deoxyhypusine + AH2 + O2 = [eIF5A protein]-hypusine + A + H2O. The protein operates within protein modification; eIF5A hypusination. Catalyzes the hydroxylation of the N(6)-(4-aminobutyl)-L-lysine intermediate to form hypusine, an essential post-translational modification only found in mature eIF-5A factor. The sequence is that of Deoxyhypusine hydroxylase from Coccidioides immitis (strain RS) (Valley fever fungus).